Reading from the N-terminus, the 145-residue chain is Nucleoside diphosphate kinase (145 aa).

6 residues coordinate ATP: Lys11, Phe59, Arg87, Thr93, Arg104, and Asn114. The active-site Pros-phosphohistidine intermediate is His117.

The protein belongs to the NDK family. In terms of assembly, homotetramer. Mg(2+) is required as a cofactor.

Its subcellular location is the cytoplasm. It catalyses the reaction a 2'-deoxyribonucleoside 5'-diphosphate + ATP = a 2'-deoxyribonucleoside 5'-triphosphate + ADP. It carries out the reaction a ribonucleoside 5'-diphosphate + ATP = a ribonucleoside 5'-triphosphate + ADP. In terms of biological role, major role in the synthesis of nucleoside triphosphates other than ATP. The ATP gamma phosphate is transferred to the NDP beta phosphate via a ping-pong mechanism, using a phosphorylated active-site intermediate. The chain is Nucleoside diphosphate kinase from Myxococcus xanthus.